The sequence spans 283 residues: Cytosolic Fe-S cluster assembly factor CFD1 (283 aa).

26–33 (GKGGVGKS) lines the ATP pocket. 2 residues coordinate [4Fe-4S] cluster: C202 and C205.

This sequence belongs to the Mrp/NBP35 ATP-binding proteins family. NUBP2/CFD1 subfamily. In terms of assembly, heterotetramer of 2 NBP35 and 2 CFD1 chains. The cofactor is [4Fe-4S] cluster.

The protein resides in the cytoplasm. In terms of biological role, component of the cytosolic iron-sulfur (Fe/S) protein assembly (CIA) machinery. Required for maturation of extramitochondrial Fe-S proteins. The NBP35-CFD1 heterotetramer forms a Fe-S scaffold complex, mediating the de novo assembly of an Fe-S cluster and its transfer to target apoproteins. Required for biogenesis and export of both ribosomal subunits, which may reflect a role in assembly of the Fe/S clusters in RLI1, a protein which performs rRNA processing and ribosome export. This is Cytosolic Fe-S cluster assembly factor CFD1 from Kluyveromyces lactis (strain ATCC 8585 / CBS 2359 / DSM 70799 / NBRC 1267 / NRRL Y-1140 / WM37) (Yeast).